Consider the following 607-residue polypeptide: Glutamine--fructose-6-phosphate aminotransferase [isomerizing] (607 aa).

The Nucleophile; for GATase activity role is filled by C2. The Glutamine amidotransferase type-2 domain occupies 2-217 (CGIIGIIGND…DGDWAVLTRN (216 aa)). SIS domains are found at residues 283 to 422 (IGID…ARGA) and 455 to 597 (VCHD…VDQP). The For Fru-6P isomerization activity role is filled by K602.

Homodimer.

The protein resides in the cytoplasm. It catalyses the reaction D-fructose 6-phosphate + L-glutamine = D-glucosamine 6-phosphate + L-glutamate. In terms of biological role, catalyzes the first step in hexosamine metabolism, converting fructose-6P into glucosamine-6P using glutamine as a nitrogen source. This is Glutamine--fructose-6-phosphate aminotransferase [isomerizing] from Brucella melitensis biotype 1 (strain ATCC 23456 / CCUG 17765 / NCTC 10094 / 16M).